The sequence spans 1564 residues: Superkiller complex protein 3 (1564 aa).

Position 2 is an N-acetylserine (Ser2). TPR repeat units follow at residues 6 to 39, 40 to 73, 272 to 305, 307 to 339, 386 to 419, 420 to 453, 455 to 492, 493 to 527, 564 to 597, 598 to 631, 633 to 665, 679 to 713, 790 to 824, 826 to 860, 861 to 894, 980 to 1013, 1020 to 1054, 1056 to 1084, 1326 to 1359, and 1400 to 1433; these read VKTALKSARDAIRNKEYKEALKHCKTVLKQEKNN, YNAWVFIGVAAAELEQPDQAQSAYKKAAELEPDQ, GPGLIGLGIKALQDKKYEDAVRNLTEGLKESPVC, SGWYHLAEAQVKMHRPKEAVLSCSQALKIVDNL, PGLLVLKSLAYRNKGSFDEAAKIMEDLLSSYPDL, AEVHALEALIHFTKKDYLQAEKCFQRALEKDTEV, EYHYQLGLTYWFMGEETRKDKTKALTHFLKAARLDTYM, GKVFCYLGHYYRDVVGDKNRARGCYRKAFELDDTD, KWAWLRRGLYYLKAGQHSQAVADLQAALRADPKD, FNCWESLGEAYLSRGGYTTALKSFTKASELNPES, YSVFKVAAIQQILGKYKEAVAQYQMIIKKKEDY, MAKAALVDYLDGKAVDYIEKALEYFTCALQHRADV, AQHLAETGSNMNDLKELLEKSLHCLKKAVRLDSNN, LYWNALGVVACYSGIGNYALAQHCFIKSIQSEQIN, AVAWTNLGVLYLTNENIEQAHEAFKMAQSLDPSY, APAFTMLGYLNEHLQLKKEAANAYQRAILLLQTA, NVAIRNYGRLLCSTGEYDKAIQAFKSTPLEVLEDI, GFALALFMKGLYKESSKAYERALSIVESE, KWSLSQAVTGLIDTGRISEAETLCTKNLKSNPDQ, and VPAWQWLAHVYQSQGMMRAAEMCYRKSLQLASQR.

The protein belongs to the SKI3 family. As to quaternary structure, component of the SKI complex which consists of SKIC2, SKIC3 and SKIC8. Interacts with PAF1. As to expression, widely expressed with the highest levels observed in vascular tissues, lymph node, pituitary, lung and intestine. Not expressed in the liver.

It is found in the cytoplasm. Its subcellular location is the nucleus. In terms of biological role, component of the SKI complex, a multiprotein complex that assists the RNA-degrading exosome during the mRNA decay and quality-control pathways. The SKI complex catalyzes mRNA extraction from 80S ribosomal complexes in the 3'-5' direction and channels mRNA to the cytosolic exosome for degradation. SKI-mediated extraction of mRNA from stalled ribosomes allow binding of the Pelota-HBS1L complex and subsequent ribosome disassembly by ABCE1 for ribosome recycling. In the nucleus, the SKI complex associates with transcriptionally active genes in a manner dependent on PAF1 complex (PAF1C). The protein is Superkiller complex protein 3 of Homo sapiens (Human).